A 459-amino-acid chain; its full sequence is Serine--tRNA ligase (459 aa).

Threonine 254–glutamate 256 is an L-serine binding site. ATP contacts are provided by residues arginine 285 to glutamate 287 and valine 301. An L-serine-binding site is contributed by glutamate 308. Glutamate 372–serine 375 is an ATP binding site. Threonine 408 lines the L-serine pocket.

This sequence belongs to the class-II aminoacyl-tRNA synthetase family. Type-1 seryl-tRNA synthetase subfamily. In terms of assembly, homodimer. The tRNA molecule binds across the dimer.

It is found in the cytoplasm. The enzyme catalyses tRNA(Ser) + L-serine + ATP = L-seryl-tRNA(Ser) + AMP + diphosphate + H(+). It carries out the reaction tRNA(Sec) + L-serine + ATP = L-seryl-tRNA(Sec) + AMP + diphosphate + H(+). Its pathway is aminoacyl-tRNA biosynthesis; selenocysteinyl-tRNA(Sec) biosynthesis; L-seryl-tRNA(Sec) from L-serine and tRNA(Sec): step 1/1. Functionally, catalyzes the attachment of serine to tRNA(Ser). Is also able to aminoacylate tRNA(Sec) with serine, to form the misacylated tRNA L-seryl-tRNA(Sec), which will be further converted into selenocysteinyl-tRNA(Sec). This is Serine--tRNA ligase from Staphylothermus marinus (strain ATCC 43588 / DSM 3639 / JCM 9404 / F1).